The sequence spans 1107 residues: Unconventional myosin-Ie (1107 aa).

Residues 19 to 692 (SGVDDMVLLS…SLFLLEEMRE (674 aa)) form the Myosin motor domain. 112-119 (GESGAGKT) serves as a coordination point for ATP. Residues 581 to 591 (PHYIRCIKPNE) are actin-binding. One can recognise an IQ domain in the interval 695–724 (YDGYARVIQKTWRKFVARKKYVQMREEASD). Positions 730–922 (KERRRNSINR…NKVLQVSIGP (193 aa)) constitute a TH1 domain. The interval 919-1052 (SIGPGLPKNS…KPQPKPKPQV (134 aa)) is disordered. Polar residues-rich tracts occupy residues 979 to 989 (NQRSNQKSLYT) and 998 to 1012 (RQQS…QTPE). S1001 carries the post-translational modification Phosphoserine. The segment covering 1034 to 1051 (RPPPAGGRPKPQPKPKPQ) has biased composition (pro residues). Residues 1050–1107 (PQVPQCKALYAYDAQDTDELSFNANDIIDIIKEDPSGWWTGRLRGKQGLFPNNYVTKI) enclose the SH3 domain.

This sequence belongs to the TRAFAC class myosin-kinesin ATPase superfamily. Myosin family. In terms of assembly, interacts with CALM and F-actin. Interacts (via SH3 domain) with SYNJ1, DNM1 and DNM2. Interacts with ARL14EP. Interacts with CARMIL1. Detected in kidney glomeruli (at protein level). Detected in utricle.

Its subcellular location is the cytoplasm. The protein resides in the cell junction. The protein localises to the cytoplasmic vesicle. It is found in the clathrin-coated vesicle. It localises to the cytoskeleton. In terms of biological role, myosins are actin-based motor molecules with ATPase activity. Unconventional myosins serve in intracellular movements. Their highly divergent tails bind to membranous compartments, which are then moved relative to actin filaments. Binds to membranes containing anionic phospholipids via its tail domain. Involved in clathrin-mediated endocytosis and intracellular movement of clathrin-coated vesicles. Required for normal morphology of the glomerular basement membrane, normal development of foot processes by kidney podocytes and normal kidney function. In dendritic cells, may control the movement of class II-containing cytoplasmic vesicles along the actin cytoskeleton by connecting them with the actin network via ARL14EP and ARL14. The polypeptide is Unconventional myosin-Ie (Myo1e) (Mus musculus (Mouse)).